A 399-amino-acid chain; its full sequence is tRNA-specific 2-thiouridylase MnmA (399 aa).

Residues 18 to 25 (AMSGGVDS) and Leu-44 each bind ATP. The active-site Nucleophile is the Cys-112. The cysteines at positions 112 and 213 are disulfide-linked. Residue Gly-136 coordinates ATP. An interaction with tRNA region spans residues 163 to 165 (RDQ). The active-site Cysteine persulfide intermediate is Cys-213.

The protein belongs to the MnmA/TRMU family.

The protein localises to the cytoplasm. The catalysed reaction is S-sulfanyl-L-cysteinyl-[protein] + uridine(34) in tRNA + AH2 + ATP = 2-thiouridine(34) in tRNA + L-cysteinyl-[protein] + A + AMP + diphosphate + H(+). Catalyzes the 2-thiolation of uridine at the wobble position (U34) of tRNA, leading to the formation of s(2)U34. This chain is tRNA-specific 2-thiouridylase MnmA, found in Rhizobium leguminosarum bv. trifolii (strain WSM2304).